Reading from the N-terminus, the 335-residue chain is N-acetyl-gamma-glutamyl-phosphate reductase (335 aa).

Cys-147 is a catalytic residue.

It belongs to the NAGSA dehydrogenase family. Type 1 subfamily.

The protein localises to the cytoplasm. It catalyses the reaction N-acetyl-L-glutamate 5-semialdehyde + phosphate + NADP(+) = N-acetyl-L-glutamyl 5-phosphate + NADPH + H(+). It participates in amino-acid biosynthesis; L-arginine biosynthesis; N(2)-acetyl-L-ornithine from L-glutamate: step 3/4. Catalyzes the NADPH-dependent reduction of N-acetyl-5-glutamyl phosphate to yield N-acetyl-L-glutamate 5-semialdehyde. The sequence is that of N-acetyl-gamma-glutamyl-phosphate reductase from Campylobacter hominis (strain ATCC BAA-381 / DSM 21671 / CCUG 45161 / LMG 19568 / NCTC 13146 / CH001A).